Consider the following 30-residue polypeptide: Thylakoid lumenal 17 kDa protein (30 aa).

The protein resides in the plastid. It is found in the chloroplast thylakoid lumen. This Spinacia oleracea (Spinach) protein is Thylakoid lumenal 17 kDa protein.